A 619-amino-acid chain; its full sequence is Isocitrate dehydrogenase kinase/phosphatase (619 aa).

Residues 354-360 (APGIRGM) and K375 contribute to the ATP site. D409 is an active-site residue.

Belongs to the AceK family.

The protein resides in the cytoplasm. It catalyses the reaction L-seryl-[isocitrate dehydrogenase] + ATP = O-phospho-L-seryl-[isocitrate dehydrogenase] + ADP + H(+). In terms of biological role, bifunctional enzyme which can phosphorylate or dephosphorylate isocitrate dehydrogenase (IDH) on a specific serine residue. This is a regulatory mechanism which enables bacteria to bypass the Krebs cycle via the glyoxylate shunt in response to the source of carbon. When bacteria are grown on glucose, IDH is fully active and unphosphorylated, but when grown on acetate or ethanol, the activity of IDH declines drastically concomitant with its phosphorylation. This chain is Isocitrate dehydrogenase kinase/phosphatase, found in Bordetella bronchiseptica (strain ATCC BAA-588 / NCTC 13252 / RB50) (Alcaligenes bronchisepticus).